The primary structure comprises 163 residues: 3-isopropylmalate dehydratase small subunit 2 (163 aa).

Belongs to the LeuD family. LeuD type 2 subfamily. As to quaternary structure, heterodimer of LeuC and LeuD.

The enzyme catalyses (2R,3S)-3-isopropylmalate = (2S)-2-isopropylmalate. It functions in the pathway amino-acid biosynthesis; L-leucine biosynthesis; L-leucine from 3-methyl-2-oxobutanoate: step 2/4. Catalyzes the isomerization between 2-isopropylmalate and 3-isopropylmalate, via the formation of 2-isopropylmaleate. In Pyrococcus abyssi (strain GE5 / Orsay), this protein is 3-isopropylmalate dehydratase small subunit 2 (leuD2).